Reading from the N-terminus, the 303-residue chain is Porphobilinogen deaminase (303 aa).

The residue at position 240 (C240) is an S-(dipyrrolylmethanemethyl)cysteine.

It belongs to the HMBS family. As to quaternary structure, monomer. Dipyrromethane is required as a cofactor.

The enzyme catalyses 4 porphobilinogen + H2O = hydroxymethylbilane + 4 NH4(+). It functions in the pathway porphyrin-containing compound metabolism; protoporphyrin-IX biosynthesis; coproporphyrinogen-III from 5-aminolevulinate: step 2/4. Its function is as follows. Tetrapolymerization of the monopyrrole PBG into the hydroxymethylbilane pre-uroporphyrinogen in several discrete steps. The polypeptide is Porphobilinogen deaminase (Stenotrophomonas maltophilia (strain R551-3)).